A 179-amino-acid polypeptide reads, in one-letter code: Large ribosomal subunit protein uL6 (179 aa).

The protein belongs to the universal ribosomal protein uL6 family. As to quaternary structure, part of the 50S ribosomal subunit.

Its function is as follows. This protein binds to the 23S rRNA, and is important in its secondary structure. It is located near the subunit interface in the base of the L7/L12 stalk, and near the tRNA binding site of the peptidyltransferase center. This chain is Large ribosomal subunit protein uL6, found in Leptospira biflexa serovar Patoc (strain Patoc 1 / ATCC 23582 / Paris).